The primary structure comprises 123 residues: Holo-[acyl-carrier-protein] synthase (123 aa).

2 residues coordinate Mg(2+): D8 and E56.

This sequence belongs to the P-Pant transferase superfamily. AcpS family. The cofactor is Mg(2+).

It is found in the cytoplasm. The enzyme catalyses apo-[ACP] + CoA = holo-[ACP] + adenosine 3',5'-bisphosphate + H(+). Transfers the 4'-phosphopantetheine moiety from coenzyme A to a Ser of acyl-carrier-protein. The protein is Holo-[acyl-carrier-protein] synthase of Clostridium botulinum (strain Alaska E43 / Type E3).